The following is a 337-amino-acid chain: Large ribosomal subunit protein uL3 (337 aa).

The segment at 1-20 is disordered; it reads MASIHRPKRGSLAFSPRKRA.

Belongs to the universal ribosomal protein uL3 family. Part of the 50S ribosomal subunit. Forms a cluster with proteins L14 and L24e.

One of the primary rRNA binding proteins, it binds directly near the 3'-end of the 23S rRNA, where it nucleates assembly of the 50S subunit. This chain is Large ribosomal subunit protein uL3, found in Methanosarcina acetivorans (strain ATCC 35395 / DSM 2834 / JCM 12185 / C2A).